The chain runs to 1648 residues: eIF-2-alpha kinase GCN2 (1648 aa).

Positions 1–26 (MAGGRGASGRGRAEPQESYSQRQDHE) are disordered. One can recognise an RWD domain in the interval 25 to 137 (HELQALEAIY…HHVQSFLSEH (113 aa)). The stretch at 146 to 205 (HEEMLERQAQEKQQRLLEARRKEEQEQREILHEIQRRKEEIKEEKKRKEMAKQERLEITS) forms a coiled coil. The residue at position 230 (Ser-230) is a Phosphoserine. 2 Protein kinase domains span residues 286–538 (VGSD…HSFI) and 589–1000 (FEEL…SELL). ATP is bound by residues 595–603 (LGKGAFGAV) and Lys-618. The tract at residues 661 to 784 (PAVPGTPPPD…CNQKDGSHEI (124 aa)) is disordered. Thr-666 is subject to Phosphothreonine. Composition is skewed to polar residues over residues 673 to 686 (PQAQ…GKTS) and 704 to 722 (LSSS…STRF). Acidic residues-rich tracts occupy residues 730 to 739 (SSDEEDEDER) and 753 to 763 (SDSDIIFDNED). A compositionally biased stretch (basic and acidic residues) spans 775–784 (CNQKDGSHEI). Residue Asp-846 is the Proton acceptor of the active site. Thr-869 bears the Phosphothreonine mark. Residues Thr-898 and Thr-903 each carry the phosphothreonine; by autocatalysis modification. The tract at residues 1021–1492 (IDGKAYRTMM…DHVMQKLRTK (472 aa)) is histidyl-tRNA synthetase-like. Lys-1258 carries the post-translational modification N6-acetyllysine.

This sequence belongs to the protein kinase superfamily. Ser/Thr protein kinase family. GCN2 subfamily. In terms of assembly, homodimer; homodimerization is important for kinase activation by uncharged tRNAs. Interacts with GCN1; this interaction stimulates EIF2AK4/GCN2 kinase activity and is impaired by IMPACT upon a variety of stress conditions, such as amino acid depletion, UV-C irradiation, proteasome inhibitor treatment and glucose deprivation. Interacts with DNAJC3; this interaction inhibits EIF2AK4/GCN2 kinase activity during endoplasmic reticulum (ER), hypothermic and amino acid-starving stress conditions. Interacts with MAP3K20; activates EIF2AK4/GCN2 kinase activity in response to moderate ribotoxic stress. Post-translationally, autophosphorylated; autophosphorylation on Thr-898 is increased upon amino acid starvation and in UV irradiation cells and inhibited in presence of IMPACT. Expressed in liver. Expressed predominantly in the hippocampal CA1 region and the dentate gyrus, and to a lesser degree in CA3 (at protein level). Expressed in liver, lung, brain, kidney, skeletal muscle and testis. Expressed weakly in heart and spleen. Expressed in the hippocampal CA1 and CA3 regions, the dentate gyrus and cerebellum. Isoform 1 is widely expressed. Isoform 1 is expressed in brain, liver, skeletal muscle and testis. Isoform 3 is expressed in lung, brain, testis, prostate and choroid plexus. Isoform 4 is expressed in muscle, lung, kidney, brain, testis and prostate.

Its subcellular location is the cytoplasm. The enzyme catalyses L-seryl-[protein] + ATP = O-phospho-L-seryl-[protein] + ADP + H(+). The catalysed reaction is L-threonyl-[protein] + ATP = O-phospho-L-threonyl-[protein] + ADP + H(+). With respect to regulation, (Microbial infection) Kinase activity is enhanced by alphavirus genomic RNA sequences. Kinase activity is stimulated upon binding to uncharged tRNAs. Activated by serum starvation (in vitro). Functionally, metabolic-stress sensing protein kinase that phosphorylates the alpha subunit of eukaryotic translation initiation factor 2 (EIF2S1/eIF-2-alpha) in response to low amino acid availability. Plays a role as an activator of the integrated stress response (ISR) required for adaptation to amino acid starvation. EIF2S1/eIF-2-alpha phosphorylation in response to stress converts EIF2S1/eIF-2-alpha into a global protein synthesis inhibitor, leading to a global attenuation of cap-dependent translation, and thus to a reduced overall utilization of amino acids, while concomitantly initiating the preferential translation of ISR-specific mRNAs, such as the transcriptional activator ATF4, and hence allowing ATF4-mediated reprogramming of amino acid biosynthetic gene expression to alleviate nutrient depletion. Required for the translational induction of protein kinase PRKCH following amino acid starvation. Binds uncharged tRNAs. Involved in cell cycle arrest by promoting cyclin D1 mRNA translation repression after the unfolded protein response pathway (UPR) activation or cell cycle inhibitor CDKN1A/p21 mRNA translation activation in response to amino acid deprivation. Plays a role in the consolidation of synaptic plasticity, learning as well as formation of long-term memory. Plays a role in neurite outgrowth inhibition. Plays a role in feeding behavior to maintain amino acid homeostasis; contributes to the innate aversion toward diets of imbalanced amino acid composition. Plays a proapoptotic role in response to glucose deprivation. Promotes global cellular protein synthesis repression in response to UV irradiation independently of the stress-activated protein kinase/c-Jun N-terminal kinase (SAPK/JNK) and p38 MAPK signaling pathways. Its function is as follows. (Microbial infection) Plays a role in the antiviral response against alphavirus infection; impairs early viral mRNA translation of the incoming genomic virus RNA, thus preventing alphavirus replication. In terms of biological role, (Microbial infection) Plays a role in modulating the adaptive immune response to Yellow fever virus infection; promotes dendritic cells to initiate autophagy and antigene presentation to both CD4(+) and CD8(+) T-cells under amino acid starvation. This Mus musculus (Mouse) protein is eIF-2-alpha kinase GCN2.